The sequence spans 266 residues: Interleukin-1 beta (266 aa).

Positions 1–113 are excised as a propeptide; it reads MAPVPEPINE…ETSSDEFLCD (113 aa).

The protein belongs to the IL-1 family. As to quaternary structure, monomer. In its precursor form, weakly interacts with full-length MEFV; the mature cytokine does not interact at all. Interacts with integrins ITGAV:ITGBV and ITGA5:ITGB1; integrin-binding is required for IL1B signaling. Interacts with cargo receptor TMED10; the interaction is direct and is required for the secretion of IL1B mature form. Interacts with HSP90AB1; the interaction facilitates cargo translocation into the ERGIC. Interacts with HSP90B1; the interaction facilitates cargo translocation into the ERGIC.

Its subcellular location is the cytoplasm. The protein localises to the cytosol. It localises to the secreted. It is found in the lysosome. The protein resides in the extracellular exosome. Potent pro-inflammatory cytokine. Initially discovered as the major endogenous pyrogen, induces prostaglandin synthesis, neutrophil influx and activation, T-cell activation and cytokine production, B-cell activation and antibody production, and fibroblast proliferation and collagen production. Promotes Th17 differentiation of T-cells. Synergizes with IL12/interleukin-12 to induce IFNG synthesis from T-helper 1 (Th1) cells. Plays a role in angiogenesis by inducing VEGF production synergistically with TNF and IL6. Involved in transduction of inflammation downstream of pyroptosis: its mature form is specifically released in the extracellular milieu by passing through the gasdermin-D (GSDMD) pore. The protein is Interleukin-1 beta (IL1B) of Cervus elaphus (Red deer).